Reading from the N-terminus, the 189-residue chain is Glucose-6-phosphate isomerase (189 aa).

Fe cation-binding residues include His-88, His-90, Glu-97, and His-136.

It belongs to the archaeal-type GPI family. In terms of assembly, homodimer. Fe cation is required as a cofactor.

The protein localises to the cytoplasm. The catalysed reaction is alpha-D-glucose 6-phosphate = beta-D-fructose 6-phosphate. Its pathway is carbohydrate degradation; glycolysis; D-glyceraldehyde 3-phosphate and glycerone phosphate from D-glucose: step 2/4. Inhibited by mannose 6-phosphate, fructose 1-phosphate and fructose 1,6-bisphosphate. The polypeptide is Glucose-6-phosphate isomerase (pgiA) (Pyrococcus furiosus (strain ATCC 43587 / DSM 3638 / JCM 8422 / Vc1)).